The chain runs to 265 residues: DNA repair protein RecO (265 aa).

It belongs to the RecO family.

Functionally, involved in DNA repair and RecF pathway recombination. This chain is DNA repair protein RecO, found in Mycobacterium ulcerans (strain Agy99).